A 95-amino-acid chain; its full sequence is Signal recognition particle 19 kDa protein (95 aa).

It belongs to the SRP19 family. Part of the signal recognition particle protein translocation system, which is composed of SRP and FtsY. Archaeal SRP consists of a 7S RNA molecule of 300 nucleotides and two protein subunits: SRP54 and SRP19.

The protein resides in the cytoplasm. Functionally, involved in targeting and insertion of nascent membrane proteins into the cytoplasmic membrane. Binds directly to 7S RNA and mediates binding of the 54 kDa subunit of the SRP. This is Signal recognition particle 19 kDa protein from Desulfurococcus amylolyticus (strain DSM 18924 / JCM 16383 / VKM B-2413 / 1221n) (Desulfurococcus kamchatkensis).